The chain runs to 751 residues: MTNVLNLLNEIGIEELRPPQKKVIEEGLLDKSKNFLICIPTASGKTLIGEMALLNHVLDENYNLTGKKGLFIVPLKALASEKFDEFQKKYETYGIKVGMSIGDYDTKEDLSKYNIIITTSEKLDSLMRHNIEWIKDLSLAVIDEIHLIGDNERGGTLEVILTKLKNINAQIVGLSATVGNPEEIANWLNAKLVTDEWRPVELKKGIYLENEINYINNQDSQKKSFKAVKSISRNNLTDLIVDSVNEKGSCLIFCNSKRNAVGESKKHNLTKYLSKAELNDLNSISEEILSILETPTETCKSLSECIKKGVAFHHAGLTYQHRKAVEEGFRNKVIKVICCTPTLSAGLNLPCRRAIIRDIRRYSQNGLIDIPKLEIHQCIGRAGRPGLDPYGEGIILAKNEKDVEKAFLALTGPLENIYSKLSNQKVLRVHILGLIATLEIKSTSELINFIKNTFYAHQYGNLHGVLTNVSKVVEFLEKNKFIETLDDDFTPKKNRVLELTLDNSNNLVLDSKRRMDTLTNLSFKPTNLGKRVSELYIDPLSSEIIIEGLNELKEKINDMDRSNIDQYIFYIISKATEMRPLLRVKMDEELELIQEMDKLKISDYSIENIEAFKNSKMFLDWINETPEEVILEKYGIEPGILRYKVDQARWMTYSSKEIAKLVKLNNDKIYKALLEMEFRIEYGAKEELIELLKIKNIGRVRARRLFNIGIKSKMDILKNPEKIISTFGDKVGKKILDEFGLKYGQQKLSGF.

ATP contacts are provided by residues Gln20 and 39 to 46 (IPTASGKT). Residues 26 to 196 (EGLLDKSKNF…WLNAKLVTDE (171 aa)) form the Helicase ATP-binding domain. The DEAH box signature appears at 143 to 146 (DEIH). Residues 235-435 (NLTDLIVDSV…VLRVHILGLI (201 aa)) form the Helicase C-terminal domain.

This sequence belongs to the helicase family. Hel308 subfamily. In terms of assembly, monomer.

It carries out the reaction Couples ATP hydrolysis with the unwinding of duplex DNA by translocating in the 3'-5' direction.. The catalysed reaction is ATP + H2O = ADP + phosphate + H(+). Its function is as follows. DNA-dependent ATPase and 3'-5' DNA helicase that may be involved in repair of stalled replication forks. This Methanococcus vannielii (strain ATCC 35089 / DSM 1224 / JCM 13029 / OCM 148 / SB) protein is ATP-dependent DNA helicase Hel308.